The primary structure comprises 145 residues: D-aminoacyl-tRNA deacylase (145 aa).

Residues 137-138 (GP) carry the Gly-cisPro motif, important for rejection of L-amino acids motif.

This sequence belongs to the DTD family. In terms of assembly, homodimer.

Its subcellular location is the cytoplasm. The enzyme catalyses glycyl-tRNA(Ala) + H2O = tRNA(Ala) + glycine + H(+). It catalyses the reaction a D-aminoacyl-tRNA + H2O = a tRNA + a D-alpha-amino acid + H(+). Its function is as follows. An aminoacyl-tRNA editing enzyme that deacylates mischarged D-aminoacyl-tRNAs. Also deacylates mischarged glycyl-tRNA(Ala), protecting cells against glycine mischarging by AlaRS. Acts via tRNA-based rather than protein-based catalysis; rejects L-amino acids rather than detecting D-amino acids in the active site. By recycling D-aminoacyl-tRNA to D-amino acids and free tRNA molecules, this enzyme counteracts the toxicity associated with the formation of D-aminoacyl-tRNA entities in vivo and helps enforce protein L-homochirality. The protein is D-aminoacyl-tRNA deacylase of Cronobacter sakazakii (strain ATCC BAA-894) (Enterobacter sakazakii).